Consider the following 390-residue polypeptide: Neuromedin-B receptor (390 aa).

The Extracellular portion of the chain corresponds to 1–44 (MPPKSLSNLSQTAGVNQSGFFPGASERDFLPATDRTTAEFVIRC). Residues Asn-8 and Asn-16 are each glycosylated (N-linked (GlcNAc...) asparagine). The helical transmembrane segment at 45–65 (VIPSLYLLIITVGLLGNIVLV) threads the bilayer. At 66-76 (KIFLTNSAMRS) the chain is on the cytoplasmic side. The helical transmembrane segment at 77-97 (VPNIFISNLAAGDVLLLLTCV) threads the bilayer. Topologically, residues 98–117 (PVDASRYFLDEWMFGKVGCK) are extracellular. The cysteines at positions 116 and 198 are disulfide-linked. A helical transmembrane segment spans residues 118–138 (LIPVIQLTSVGVSVFTLTALS). The Cytoplasmic segment spans residues 139–155 (ADRYRAIVNPMDIQTSG). The helical transmembrane segment at 156–176 (AVLWTCVKAGGIWVVSVLLAV) threads the bilayer. Residues 177 to 210 (PEAVFSEVARIDGLDNGSFTACIPYPQTDELHPK) lie on the Extracellular side of the membrane. An N-linked (GlcNAc...) asparagine glycan is attached at Asn-192. Residues 211-231 (IHSVLIFLVYFLIPLGIISVY) traverse the membrane as a helical segment. The Cytoplasmic segment spans residues 232 to 266 (YYHIAKTLIKSAHNLPGEYNEHTKKQMETRKRLAK). The chain crosses the membrane as a helical span at residues 267 to 287 (IVLVFVGCFVFCWFPNHILYM). Residues 288-305 (YRSFNYNEIDPSLGHMIV) are Extracellular-facing. Residues 306 to 328 (TLVARVLSFCNSCVNPFALYLLS) traverse the membrane as a helical segment. At 329 to 390 (ESFRKHFNNQ…GHSVKQEMAL (62 aa)) the chain is on the cytoplasmic side. Residue Cys-341 is the site of S-palmitoyl cysteine attachment. Phosphoserine is present on Ser-352.

The protein belongs to the G-protein coupled receptor 1 family. In terms of tissue distribution, highly expressed in peripheral tissues where it is detected in the respiratory system, circulatory system, digestive system, urogenital system, lymphatic organs and endocrine system (at protein level). In the testis, expressed mainly in Leydig cells (at protein level).

The protein localises to the cell membrane. In terms of biological role, receptor for neuromedin-B. Contributes to the maintenance of basal sigh rate through signaling in the pre-Botzinger complex, a cluster of several thousand neurons in the ventrolateral medulla responsible for inspiration during respiratory activity. Contributes to the induction of sneezing following exposure to chemical irritants or allergens which causes release of NMB by nasal sensory neurons and activation of NMBR-expressing neurons in the sneeze-evoking region of the brainstem. These in turn activate neurons of the caudal ventral respiratory group, giving rise to the sneezing response. Contributes to induction of acute itch, possibly through its activation on dorsal root ganglion neurons by the NMB peptide. Plays a role in the innate immune response to influenza A virus infection by enhancing interferon alpha expression and reducing expression of IL6. Plays a role in CSF1-induced proliferation of osteoclast precursors by contributing to the positive regulation of the expression of the CSF1 receptor CSF1R. The polypeptide is Neuromedin-B receptor (NMBR) (Sus scrofa (Pig)).